Here is a 470-residue protein sequence, read N- to C-terminus: V-type proton ATPase subunit S1 (470 aa).

The signal sequence occupies residues 1 to 41 (MMAAMATARVRMGPRCAQALWRMPWLPVFLSLAAAAAAAAA). Residues 42 to 231 (EQQVPLVLWS…TAVRPSRVAR (190 aa)) constitute a propeptide that is removed on maturation. The Lumenal portion of the chain corresponds to 42-419 (EQQVPLVLWS…EQFSYASDCA (378 aa)). N170, N261, N273, N296, N303, N350, and N357 each carry an N-linked (GlcNAc...) asparagine glycan. C371 and C418 form a disulfide bridge. The helical transmembrane segment at 420-440 (SFFSPGIWMGLLTSLFMLFIF) threads the bilayer. At 441–470 (TYGLHMILSLKTMDRFDDHKGPTISLTQIV) the chain is on the cytoplasmic side. S465 carries the post-translational modification Phosphoserine.

Belongs to the vacuolar ATPase subunit S1 family. As to quaternary structure, accessory component of the multisubunit proton-transporting vacuolar (V)-ATPase protein pump. Interacts (via N-terminus) with ATP6AP2 (via N-terminus). Interacts with RNASEK. Interacts with TMEM106B (via C-terminus). N-glycosylated. Widely expressed, with highest levels in brain and lowest in liver and duodenum.

The protein resides in the endoplasmic reticulum membrane. The protein localises to the endoplasmic reticulum-Golgi intermediate compartment membrane. Its subcellular location is the cytoplasmic vesicle. It localises to the secretory vesicle. It is found in the synaptic vesicle membrane. The protein resides in the clathrin-coated vesicle membrane. Its function is as follows. Accessory subunit of the proton-transporting vacuolar (V)-ATPase protein pump, which is required for luminal acidification of secretory vesicles. Guides the V-type ATPase into specialized subcellular compartments, such as neuroendocrine regulated secretory vesicles or the ruffled border of the osteoclast, thereby regulating its activity. Involved in membrane trafficking and Ca(2+)-dependent membrane fusion. May play a role in the assembly of the V-type ATPase complex. In aerobic conditions, involved in intracellular iron homeostasis, thus triggering the activity of Fe(2+) prolyl hydroxylase (PHD) enzymes, and leading to HIF1A hydroxylation and subsequent proteasomal degradation. In islets of Langerhans cells, may regulate the acidification of dense-core secretory granules. In Homo sapiens (Human), this protein is V-type proton ATPase subunit S1 (ATP6AP1).